The chain runs to 196 residues: Superoxide dismutase-like protein YojM (196 aa).

A signal peptide spans Met1–Gly17. Cys18 is lipidated: N-palmitoyl cysteine. Cys18 carries the S-diacylglycerol cysteine lipid modification. Position 71 (His71) interacts with Zn(2+). A Cu cation-binding site is contributed by His86. An intrachain disulfide couples Cys93 to Cys186. Asp137 contributes to the Zn(2+) binding site. His166 provides a ligand contact to Cu cation.

This sequence belongs to the Cu-Zn superoxide dismutase family. Monomer, and homodimer. Largely unstructured monomer in solution. Well-ordered homodimer in the crystal. Zn(2+) is required as a cofactor.

The protein resides in the cell membrane. This Bacillus subtilis (strain 168) protein is Superoxide dismutase-like protein YojM (yojM).